A 257-amino-acid chain; its full sequence is Reticulon-like protein B4 (257 aa).

A disordered region spans residues 19 to 42 (IHGHGDSSSLSDSDDDKKSTSSSS). Residues 68–257 (PADIFLWRNK…PRGALNKKKD (190 aa)) form the Reticulon domain. 3 helical membrane-spanning segments follow: residues 78 to 98 (KVSGGVLGAVTASWVLFELFE), 99 to 119 (YHLLAFLCHFAIFALAALFLW), and 173 to 193 (FILVIAGLWVLSIIGSCYNFL).

In terms of assembly, interacts with VirB2.

It is found in the endoplasmic reticulum membrane. In terms of biological role, plays a role in the Agrobacterium-mediated plant transformation via its interaction with VirB2, the major component of the T-pilus. In Arabidopsis thaliana (Mouse-ear cress), this protein is Reticulon-like protein B4 (RTNLB4).